A 323-amino-acid polypeptide reads, in one-letter code: DNA-directed RNA polymerase subunit alpha 1 (323 aa).

Residues 1–228 (MSNNNSKLEF…EQISVFVSLR (228 aa)) form an alpha N-terminal domain (alpha-NTD) region. The tract at residues 244-323 (IDPILLKPID…DNFRELVEGK (80 aa)) is alpha C-terminal domain (alpha-CTD).

The protein belongs to the RNA polymerase alpha chain family. In terms of assembly, homodimer. The RNAP catalytic core consists of 2 alpha, 1 beta, 1 beta' and 1 omega subunit. When a sigma factor is associated with the core the holoenzyme is formed, which can initiate transcription.

The enzyme catalyses RNA(n) + a ribonucleoside 5'-triphosphate = RNA(n+1) + diphosphate. Its function is as follows. DNA-dependent RNA polymerase catalyzes the transcription of DNA into RNA using the four ribonucleoside triphosphates as substrates. This chain is DNA-directed RNA polymerase subunit alpha 1, found in Francisella tularensis subsp. tularensis (strain FSC 198).